Here is a 604-residue protein sequence, read N- to C-terminus: Elongation factor 4 (604 aa).

One can recognise a tr-type G domain in the interval 2–184 (DHIRNFSIIA…AVITRMPAPR (183 aa)). GTP-binding positions include 14-19 (DHGKST) and 131-134 (NKMD).

It belongs to the TRAFAC class translation factor GTPase superfamily. Classic translation factor GTPase family. LepA subfamily.

It is found in the cell inner membrane. It catalyses the reaction GTP + H2O = GDP + phosphate + H(+). Its function is as follows. Required for accurate and efficient protein synthesis under certain stress conditions. May act as a fidelity factor of the translation reaction, by catalyzing a one-codon backward translocation of tRNAs on improperly translocated ribosomes. Back-translocation proceeds from a post-translocation (POST) complex to a pre-translocation (PRE) complex, thus giving elongation factor G a second chance to translocate the tRNAs correctly. Binds to ribosomes in a GTP-dependent manner. The protein is Elongation factor 4 of Methylibium petroleiphilum (strain ATCC BAA-1232 / LMG 22953 / PM1).